Here is a 177-residue protein sequence, read N- to C-terminus: ATP synthase subunit delta (177 aa).

The protein belongs to the ATPase delta chain family. F-type ATPases have 2 components, F(1) - the catalytic core - and F(0) - the membrane proton channel. F(1) has five subunits: alpha(3), beta(3), gamma(1), delta(1), epsilon(1). F(0) has three main subunits: a(1), b(2) and c(10-14). The alpha and beta chains form an alternating ring which encloses part of the gamma chain. F(1) is attached to F(0) by a central stalk formed by the gamma and epsilon chains, while a peripheral stalk is formed by the delta and b chains.

It localises to the cell inner membrane. F(1)F(0) ATP synthase produces ATP from ADP in the presence of a proton or sodium gradient. F-type ATPases consist of two structural domains, F(1) containing the extramembraneous catalytic core and F(0) containing the membrane proton channel, linked together by a central stalk and a peripheral stalk. During catalysis, ATP synthesis in the catalytic domain of F(1) is coupled via a rotary mechanism of the central stalk subunits to proton translocation. Its function is as follows. This protein is part of the stalk that links CF(0) to CF(1). It either transmits conformational changes from CF(0) to CF(1) or is implicated in proton conduction. This chain is ATP synthase subunit delta, found in Herminiimonas arsenicoxydans.